Consider the following 94-residue polypeptide: Co-chaperonin GroES (94 aa).

The protein belongs to the GroES chaperonin family. As to quaternary structure, heptamer of 7 subunits arranged in a ring. Interacts with the chaperonin GroEL.

The protein resides in the cytoplasm. Its function is as follows. Together with the chaperonin GroEL, plays an essential role in assisting protein folding. The GroEL-GroES system forms a nano-cage that allows encapsulation of the non-native substrate proteins and provides a physical environment optimized to promote and accelerate protein folding. GroES binds to the apical surface of the GroEL ring, thereby capping the opening of the GroEL channel. This Acetivibrio thermocellus (strain ATCC 27405 / DSM 1237 / JCM 9322 / NBRC 103400 / NCIMB 10682 / NRRL B-4536 / VPI 7372) (Clostridium thermocellum) protein is Co-chaperonin GroES.